A 289-amino-acid chain; its full sequence is tRNA pseudouridine synthase B (289 aa).

D38 serves as the catalytic Nucleophile.

This sequence belongs to the pseudouridine synthase TruB family. Type 1 subfamily.

The enzyme catalyses uridine(55) in tRNA = pseudouridine(55) in tRNA. In terms of biological role, responsible for synthesis of pseudouridine from uracil-55 in the psi GC loop of transfer RNAs. This Clostridium tetani (strain Massachusetts / E88) protein is tRNA pseudouridine synthase B.